Here is a 200-residue protein sequence, read N- to C-terminus: Recombination protein RecR (200 aa).

The segment at Cys57 to Cys72 adopts a C4-type zinc-finger fold. Positions Thr80–Pro175 constitute a Toprim domain.

It belongs to the RecR family.

May play a role in DNA repair. It seems to be involved in an RecBC-independent recombinational process of DNA repair. It may act with RecF and RecO. This Pseudomonas putida (strain ATCC 700007 / DSM 6899 / JCM 31910 / BCRC 17059 / LMG 24140 / F1) protein is Recombination protein RecR.